Reading from the N-terminus, the 198-residue chain is Pyridoxal 5'-phosphate synthase subunit PdxT (198 aa).

Gly-50–Ser-52 is a binding site for L-glutamine. Catalysis depends on Cys-82, which acts as the Nucleophile. Residues Arg-114 and Ile-143–Arg-144 contribute to the L-glutamine site. Catalysis depends on charge relay system residues His-179 and Glu-181.

This sequence belongs to the glutaminase PdxT/SNO family. In the presence of PdxS, forms a dodecamer of heterodimers. Only shows activity in the heterodimer.

The catalysed reaction is aldehydo-D-ribose 5-phosphate + D-glyceraldehyde 3-phosphate + L-glutamine = pyridoxal 5'-phosphate + L-glutamate + phosphate + 3 H2O + H(+). It catalyses the reaction L-glutamine + H2O = L-glutamate + NH4(+). It participates in cofactor biosynthesis; pyridoxal 5'-phosphate biosynthesis. In terms of biological role, catalyzes the hydrolysis of glutamine to glutamate and ammonia as part of the biosynthesis of pyridoxal 5'-phosphate. The resulting ammonia molecule is channeled to the active site of PdxS. This Metallosphaera sedula (strain ATCC 51363 / DSM 5348 / JCM 9185 / NBRC 15509 / TH2) protein is Pyridoxal 5'-phosphate synthase subunit PdxT.